A 229-amino-acid chain; its full sequence is MRILIVEDEPKTGMYLRKGLTEAGFIADWVEDGVTGLHQAETEEYDLIILDVMLPGHDGWTVLERLRRAHSTPVLFLTARDDVGDRVKGLELGADDYVVKPFDFVELVARVRSILRRGQARESTVLRIADLELDLTRRKATRQGDVVLLTAKEFALLWLLMRREGEILPRATIASQVWDMNFNSDTNVVDAAIRRLRSKIDDAYEPKLIHTVRGMGYVLEVRSASAPSR.

The Response regulatory domain occupies 2–115 (RILIVEDEPK…ELVARVRSIL (114 aa)). D51 bears the 4-aspartylphosphate mark. Positions 123-221 (STVLRIADLE…VRGMGYVLEV (99 aa)) form a DNA-binding region, ompR/PhoB-type.

Post-translationally, phosphorylated by IrlS.

In terms of biological role, member of the two-component regulatory system IrlR/IrlS. May be involved in invasion of eukaryotic cells and heavy-metal resistance. The polypeptide is Transcriptional activator protein IrlR (irlR) (Burkholderia pseudomallei (strain 1026b)).